Here is a 537-residue protein sequence, read N- to C-terminus: Immunoglobulin-like domain-containing receptor 1 (537 aa).

The N-terminal stretch at 1–22 is a signal peptide; the sequence is MGCGLLAAGLLLFTWLPAGCLS. The 139-residue stretch at 23 to 161 folds into the Ig-like V-type domain; sequence LLVTVQHTER…TSGDPDKEVK (139 aa). The Extracellular segment spans residues 23 to 166; the sequence is LLVTVQHTER…DKEVKLIVLH (144 aa). A disulfide bond links cysteine 44 and cysteine 144. The chain crosses the membrane as a helical span at residues 167-187; that stretch reads WLTVIFIILGALLLLLLIGVC. Topologically, residues 188-537 are cytoplasmic; it reads WCQCCPQYCC…SSHSGRSVVI (350 aa). Positions 333–537 are disordered; sequence PPLIRDPPSS…SSHSGRSVVI (205 aa). The span at 341–357 shows a compositional bias: polar residues; it reads SSRTSNPSHQQRLNAVS. Composition is skewed to basic and acidic residues over residues 359–380 and 434–444; these read RHCDLSERPRQRHHSDFLRELQ and RRPEPREGAQR. Over residues 480-490 the composition is skewed to basic residues; sequence QRRHHHRRRRS. Serine 490 and serine 492 each carry phosphoserine. Residues 518–530 show a composition bias toward basic and acidic residues; the sequence is GNVERRLERESSH.

The protein belongs to the immunoglobulin superfamily. LISCH7 family. In terms of assembly, homooligomer. Interacts with MARVELD2 and OCLN; the interaction is required to recruit MARVELD2 to tricellular contacts. Interacts (via C-terminus) with TRA2A, TRA2B and SRSF1. Interacts with PLSCR1. Expressed in the vestibule and in hair cells and supporting cells of the cochlea. Expressed in epithelial tissues. Highly expressed in colon but also detected in small intestine, bladder and lung. In colon, expressed in the upper portion of the crypts (at protein level). Expressed in CCK secretory cells of the proximal small intestine (at protein level). Expressed in the organ of Corti, stria vascularis, utricle and saccule of the inner ear.

It is found in the cell membrane. It localises to the cell junction. The protein resides in the tight junction. Its subcellular location is the nucleus. The protein localises to the cytoplasm. Maintains epithelial barrier function by recruiting MARVELD2/tricellulin to tricellular tight junctions (tTJs). Crucial for normal hearing by maintaining the structural and functional integrity of tTJs, which are critical for the survival of auditory neurosensory HCs. Mediates fatty acids and lipoproteins-stimulated CCK/cholecystokinin secretion in the small intestine. In the inner ear, may regulate alternative pre-mRNA splicing via binding to TRA2A, TRA2B and SRSF1. The sequence is that of Immunoglobulin-like domain-containing receptor 1 from Mus musculus (Mouse).